The chain runs to 36 residues: Kappa-isophellitoxin-Tst1a (36 aa).

The ShKT domain maps to 2-36; the sequence is CENNFSDRECERRKKDCDSSMKFRELSCPKTCGTC. Disulfide bonds link Cys-2–Cys-36, Cys-11–Cys-29, and Cys-18–Cys-33.

Belongs to the sea anemone type 1 potassium channel toxin family. Type 1a subfamily. Predominantly expressed in mesenterial filaments (at protein level), a morphological structure that has a functional role in prey killing and digestion. Also expressed in club-tips, tentacles, actinopharynx, body column, mesenterial filaments and pedal disk.

The protein resides in the secreted. It localises to the nematocyst. Probable toxin with unknown function. Does not inhibit all channels tested. Is not cytotoxic on macrophage. The chain is Kappa-isophellitoxin-Tst1a from Telmatactis stephensoni (Sea anemone).